The primary structure comprises 145 residues: 3-hydroxyacyl-[acyl-carrier-protein] dehydratase FabZ (145 aa).

Residue His48 is part of the active site.

It belongs to the thioester dehydratase family. FabZ subfamily.

It localises to the cytoplasm. It catalyses the reaction a (3R)-hydroxyacyl-[ACP] = a (2E)-enoyl-[ACP] + H2O. Functionally, involved in unsaturated fatty acids biosynthesis. Catalyzes the dehydration of short chain beta-hydroxyacyl-ACPs and long chain saturated and unsaturated beta-hydroxyacyl-ACPs. The chain is 3-hydroxyacyl-[acyl-carrier-protein] dehydratase FabZ from Marinobacter nauticus (strain ATCC 700491 / DSM 11845 / VT8) (Marinobacter aquaeolei).